Reading from the N-terminus, the 695-residue chain is MSEFQLVSPYQPTGDQPKAIAGLVKSISEGHRFQTLLGATGTGKTFTIAHTIQQVGRPTLVMAHNKTLAAQLCNELRELFPHNAVEYFISYYDYYQPEAYVPSTDTYIAKSSSINDEIDMLRHSATRSLFERRDVIVVASVSCIYGLGMPEEYLKASIPFKVGQEINQRDVLRDLASIQYERNDLELVRGRFRLKGDVLEIVPAYEDRVIRIEFFGDEIEAIRLIDPVTGEILNSLSALRVYPARHFVTPEAQLERAILNIEQELEEQLALFRKEGKLLEAQRLEQRTRYDLEMLREVGYCNGIENYSRHLTGRKAGEPPACLVDYFKADDWLLVVDESHVTVPQIRGMYNGDRARKQVLVDHGFRLPSALDNRPLKAEEFWAKVHQCIFVSATPGNWELEQSEAQFETRVEDGKTLKFYVQGSGRVIEQVIRPTGVVDPEVHVRPTAGQVDDLLGEIYLRLERSQLGPAERVIVTTLTKRMAEDLTEYLQERGIRVRYLHSEITSIERIEILQDFREGAFDVLVGVNLLREGLDLPEVSLVAILDADKEGFLRAERSLIQMIGRAARNVRGMVVMYADTMTSSMARAIAETQRRREIQLQYNRQHNITPKPIVKKNSNAILSFLAISRKLNDPDLEKAFQAAQEIPLSEIPELIGQLELKMKEAAKNLEFEEAAQLRDRIKKLRQRLLGHPQGI.

A Helicase ATP-binding domain is found at 25–176 (KSISEGHRFQ…NQRDVLRDLA (152 aa)). ATP is bound at residue 38–45 (GATGTGKT). The Beta-hairpin motif lies at 91-114 (YYDYYQPEAYVPSTDTYIAKSSSI). The Helicase C-terminal domain occupies 454-617 (LLGEIYLRLE…ITPKPIVKKN (164 aa)). A UVR domain is found at 652–687 (PELIGQLELKMKEAAKNLEFEEAAQLRDRIKKLRQR).

It belongs to the UvrB family. As to quaternary structure, forms a heterotetramer with UvrA during the search for lesions. Interacts with UvrC in an incision complex.

It is found in the cytoplasm. Functionally, the UvrABC repair system catalyzes the recognition and processing of DNA lesions. A damage recognition complex composed of 2 UvrA and 2 UvrB subunits scans DNA for abnormalities. Upon binding of the UvrA(2)B(2) complex to a putative damaged site, the DNA wraps around one UvrB monomer. DNA wrap is dependent on ATP binding by UvrB and probably causes local melting of the DNA helix, facilitating insertion of UvrB beta-hairpin between the DNA strands. Then UvrB probes one DNA strand for the presence of a lesion. If a lesion is found the UvrA subunits dissociate and the UvrB-DNA preincision complex is formed. This complex is subsequently bound by UvrC and the second UvrB is released. If no lesion is found, the DNA wraps around the other UvrB subunit that will check the other stand for damage. The polypeptide is UvrABC system protein B (Synechococcus sp. (strain JA-2-3B'a(2-13)) (Cyanobacteria bacterium Yellowstone B-Prime)).